A 622-amino-acid polypeptide reads, in one-letter code: Dynein axonemal assembly factor 1 (622 aa).

Residues 1–11 (MHPEVSEQQAD) are compositionally biased toward polar residues. Residues 1-80 (MHPEVSEQQA…ARNDRDDRGP (80 aa)) are disordered. The span at 32 to 42 (VRKEEINETKE) shows a compositional bias: basic and acidic residues. Residues 48–59 (STTSCQSQKQQS) are compositionally biased toward low complexity. Residues 62–80 (SRLDCRSGYARNDRDDRGP) are compositionally biased toward basic and acidic residues. 6 LRR repeats span residues 101–123 (ALNDTLYLHFKGFDRIENLEEYT), 124–145 (GLRCLWLECNGIQRIENLQAQS), 146–167 (ELRCLFLQVNLLHKIENLEPLQ), 168–189 (KLDALNLSNNYIKTIENLSCLP), 190–211 (VLNTLQMAHNRLETVADIQHLR), and 215–236 (RLCVLDLSHNMLSDPEILSVLE). Positions 249–288 (NPVTKHIPNYRRTVTVRLKQLTYLDDRPVFPKDRACAEAW) constitute an LRRCT domain. The span at 326-336 (EERKKARDKGE) shows a compositional bias: basic and acidic residues. 2 disordered regions span residues 326-360 (EERKKARDKGETPLPDSEESSSTSPEAQDKPPLGE) and 399-431 (EEPDLPGSLAQSQTPLVATAEESTSSVAATDGT). Composition is skewed to low complexity over residues 337 to 351 (TPLPDSEESSSTSPE) and 415 to 428 (VATAEESTSSVAAT). Position 349 is a phosphoserine (S349). 2 positions are modified to phosphoserine: S464 and S487. Disordered regions lie at residues 480–503 (ISSLSDDSDPELNDSPLPMLEHTP) and 525–622 (RVPL…FGLD). The span at 539 to 550 (APETQGQVFSTT) shows a compositional bias: polar residues.

This sequence belongs to the DNAAF1 family.

The protein localises to the cell projection. Its subcellular location is the cilium. Cilium-specific protein required for the stability of the ciliary architecture. Plays a role in cytoplasmic preassembly of dynein arms. Involved in regulation of microtubule-based cilia and actin-based brush border microvilli. The protein is Dynein axonemal assembly factor 1 (Dnaaf1) of Peromyscus polionotus (Oldfield mouse).